A 280-amino-acid polypeptide reads, in one-letter code: Suppressor of disruption of TFIIS (280 aa).

The protein belongs to the SSM1 family.

Its function is as follows. Could be an enzyme that inactivates 6-azauracil by modifying it. This chain is Suppressor of disruption of TFIIS (SDT1), found in Saccharomyces cerevisiae (strain ATCC 204508 / S288c) (Baker's yeast).